A 359-amino-acid polypeptide reads, in one-letter code: UPF0283 membrane protein Atu1356 (359 aa).

A disordered region spans residues 1 to 39; sequence MKAPTQNDPQTRRPAAFTLETEEAARPSATQKRAPRSFD. The next 2 membrane-spanning stretches (helical) occupy residues 75-95 and 108-128; these read FGKLGLGALGVLFSLAFGLWA and WLGYTATIALIVALFAVLALV.

This sequence belongs to the UPF0283 family.

It is found in the cell inner membrane. The polypeptide is UPF0283 membrane protein Atu1356 (Agrobacterium fabrum (strain C58 / ATCC 33970) (Agrobacterium tumefaciens (strain C58))).